The chain runs to 88 residues: Small ribosomal subunit protein bS20 (88 aa).

This sequence belongs to the bacterial ribosomal protein bS20 family.

Functionally, binds directly to 16S ribosomal RNA. The chain is Small ribosomal subunit protein bS20 from Bradyrhizobium sp. (strain BTAi1 / ATCC BAA-1182).